Consider the following 258-residue polypeptide: Probable splicing factor, arginine/serine-rich 3 (258 aa).

The 75-residue stretch at 9-83 folds into the RRM 1 domain; the sequence is QKVYVGNLPG…RRIRVEFTRG (75 aa). Disordered stretches follow at residues 81-120 and 190-258; these read TRGVGPRGPGGRPLQDGGDHRGGDFRGGRGGGRGGGPQRR and AYIR…PSPQ. Basic and acidic residues predominate over residues 97–107; sequence GGDHRGGDFRG. The span at 108 to 117 shows a compositional bias: gly residues; sequence GRGGGRGGGP. Positions 123 to 197 constitute an RRM 2 domain; sequence YRVIVEGLPP…ETAYIRVRED (75 aa). Residues 208–223 are compositionally biased toward basic and acidic residues; sequence GRDRSRSRSPRAERRA. Residues 228–246 are compositionally biased toward basic residues; it reads SPRRSRSRSRSRSRSRSRS. The span at 247 to 258 shows a compositional bias: low complexity; it reads ASRSPSRSPSPQ.

The protein belongs to the splicing factor SR family. Interacts with spk-1. In terms of processing, directly phosphorylated by spk-1 in vitro on serine residues of the RS domain. Predominantly coexpressed with spk-1 in adult hermaphrodite germlines.

The protein localises to the nucleus. Plays an essential role in embryogenesis. In Caenorhabditis elegans, this protein is Probable splicing factor, arginine/serine-rich 3 (rsp-3).